A 307-amino-acid polypeptide reads, in one-letter code: Small ribosomal subunit biogenesis GTPase RsgA (307 aa).

Residues 1-21 (MPSEHPFSDGISTPNPKETMN) form a disordered region. Residues 10–21 (GISTPNPKETMN) show a composition bias toward polar residues. The CP-type G domain occupies 85-242 (RQDAWKTKLI…LIDSPGLQEF (158 aa)). GTP-binding positions include 135–138 (NKAD) and 184–192 (GQSGMGKST). The Zn(2+) site is built by C266, C271, H273, and C279.

Belongs to the TRAFAC class YlqF/YawG GTPase family. RsgA subfamily. In terms of assembly, monomer. Associates with 30S ribosomal subunit, binds 16S rRNA. Requires Zn(2+) as cofactor.

The protein resides in the cytoplasm. Its function is as follows. One of several proteins that assist in the late maturation steps of the functional core of the 30S ribosomal subunit. Helps release RbfA from mature subunits. May play a role in the assembly of ribosomal proteins into the subunit. Circularly permuted GTPase that catalyzes slow GTP hydrolysis, GTPase activity is stimulated by the 30S ribosomal subunit. This chain is Small ribosomal subunit biogenesis GTPase RsgA, found in Neisseria gonorrhoeae (strain NCCP11945).